The primary structure comprises 295 residues: Phosphatidylserine decarboxylase proenzyme (295 aa).

Active-site charge relay system; for autoendoproteolytic cleavage activity residues include aspartate 90, histidine 147, and serine 254. The active-site Schiff-base intermediate with substrate; via pyruvic acid; for decarboxylase activity is serine 254. Position 254 is a pyruvic acid (Ser); by autocatalysis (serine 254).

This sequence belongs to the phosphatidylserine decarboxylase family. PSD-B subfamily. Prokaryotic type I sub-subfamily. Heterodimer of a large membrane-associated beta subunit and a small pyruvoyl-containing alpha subunit. Pyruvate is required as a cofactor. Post-translationally, is synthesized initially as an inactive proenzyme. Formation of the active enzyme involves a self-maturation process in which the active site pyruvoyl group is generated from an internal serine residue via an autocatalytic post-translational modification. Two non-identical subunits are generated from the proenzyme in this reaction, and the pyruvate is formed at the N-terminus of the alpha chain, which is derived from the carboxyl end of the proenzyme. The autoendoproteolytic cleavage occurs by a canonical serine protease mechanism, in which the side chain hydroxyl group of the serine supplies its oxygen atom to form the C-terminus of the beta chain, while the remainder of the serine residue undergoes an oxidative deamination to produce ammonia and the pyruvoyl prosthetic group on the alpha chain. During this reaction, the Ser that is part of the protease active site of the proenzyme becomes the pyruvoyl prosthetic group, which constitutes an essential element of the active site of the mature decarboxylase.

The protein resides in the cell membrane. It carries out the reaction a 1,2-diacyl-sn-glycero-3-phospho-L-serine + H(+) = a 1,2-diacyl-sn-glycero-3-phosphoethanolamine + CO2. The protein operates within phospholipid metabolism; phosphatidylethanolamine biosynthesis; phosphatidylethanolamine from CDP-diacylglycerol: step 2/2. Catalyzes the formation of phosphatidylethanolamine (PtdEtn) from phosphatidylserine (PtdSer). The protein is Phosphatidylserine decarboxylase proenzyme of Sodalis glossinidius (strain morsitans).